Reading from the N-terminus, the 146-residue chain is Hemoglobin A/D subunit beta (146 aa).

Positions 2 to 146 constitute a Globin domain; that stretch reads HWTSEEKQYI…VAHALALGYH (145 aa). Residues histidine 63 and histidine 92 each contribute to the heme b site.

Belongs to the globin family. Hemoglobins A and D are heterotetramers of alpha-1, alpha-2 and two identical beta chains. Red blood cells.

In terms of biological role, involved in oxygen transport from the lung to the various peripheral tissues. This chain is Hemoglobin A/D subunit beta, found in Aldabrachelys gigantea (Aldabra giant tortoise).